A 760-amino-acid polypeptide reads, in one-letter code: Cellulose synthase-like protein G1 (760 aa).

The next 2 helical transmembrane spans lie at 28–48 (IYAI…VHSL) and 54–74 (TLIT…WATT). Active-site residues include Asp142 and Asp447. A run of 5 helical transmembrane segments spans residues 530 to 550 (IPLT…VSVF), 558 to 578 (FWLY…DFLL), 593 to 613 (LMIK…LKTL), 656 to 676 (VAIV…FCGG), and 680 to 700 (LELM…GAMV).

The protein belongs to the glycosyltransferase 2 family. Plant cellulose synthase-like G subfamily. Expressed in young seedlings, primarily in the vascular tissue.

It localises to the golgi apparatus membrane. Functionally, thought to be a Golgi-localized beta-glycan synthase that polymerize the backbones of noncellulosic polysaccharides (hemicelluloses) of plant cell wall. In Arabidopsis thaliana (Mouse-ear cress), this protein is Cellulose synthase-like protein G1 (CSLG1).